The following is a 154-amino-acid chain: 6,7-dimethyl-8-ribityllumazine synthase (154 aa).

5-amino-6-(D-ribitylamino)uracil-binding positions include phenylalanine 21, alanine 55–glutamate 57, and cysteine 79–isoleucine 81. Residue alanine 84–threonine 85 participates in (2S)-2-hydroxy-3-oxobutyl phosphate binding. Histidine 87 (proton donor) is an active-site residue. Phenylalanine 112 serves as a coordination point for 5-amino-6-(D-ribitylamino)uracil. A (2S)-2-hydroxy-3-oxobutyl phosphate-binding site is contributed by arginine 126.

The protein belongs to the DMRL synthase family. Forms an icosahedral capsid composed of 60 subunits, arranged as a dodecamer of pentamers.

The enzyme catalyses (2S)-2-hydroxy-3-oxobutyl phosphate + 5-amino-6-(D-ribitylamino)uracil = 6,7-dimethyl-8-(1-D-ribityl)lumazine + phosphate + 2 H2O + H(+). The protein operates within cofactor biosynthesis; riboflavin biosynthesis; riboflavin from 2-hydroxy-3-oxobutyl phosphate and 5-amino-6-(D-ribitylamino)uracil: step 1/2. Functionally, catalyzes the formation of 6,7-dimethyl-8-ribityllumazine by condensation of 5-amino-6-(D-ribitylamino)uracil with 3,4-dihydroxy-2-butanone 4-phosphate. This is the penultimate step in the biosynthesis of riboflavin. The sequence is that of 6,7-dimethyl-8-ribityllumazine synthase from Staphylococcus aureus (strain Newman).